Here is a 557-residue protein sequence, read N- to C-terminus: Potassium-transporting ATPase potassium-binding subunit (557 aa).

A run of 12 helical transmembrane segments spans residues 5-25, 63-83, 132-152, 170-190, 253-273, 283-303, 329-349, 356-376, 379-399, 416-436, 484-504, and 526-546; these read GFLLIATFLLVLMVLARPLGS, LCAILGLNMLGLAVLFFMLLG, GLTVQNFLSAASGIAVIFALI, LLRITLWVLVPVALLIALFFI, FVQMLAIFLIPTALCFAFGEV, LLWAMSVIFVICVGVVMWAEV, VLVSSLFAVVTTAASCGAVIA, ALGGMVPMWLMQIGEVVFGGV, GLYGMMLFVLLAVFIAGLMIG, LTALAILVTPTLVLMGAALAM, LLAFCMFVGRFGVIIPVMAIA, and LFVGLLIGTVLLVGALTFIPA.

It belongs to the KdpA family. The system is composed of three essential subunits: KdpA, KdpB and KdpC.

It is found in the cell inner membrane. Part of the high-affinity ATP-driven potassium transport (or Kdp) system, which catalyzes the hydrolysis of ATP coupled with the electrogenic transport of potassium into the cytoplasm. This subunit binds the periplasmic potassium ions and delivers the ions to the membrane domain of KdpB through an intramembrane tunnel. The protein is Potassium-transporting ATPase potassium-binding subunit of Escherichia coli (strain K12 / MC4100 / BW2952).